The sequence spans 231 residues: 7-cyano-7-deazaguanine synthase (231 aa).

17–27 lines the ATP pocket; it reads FSGGMDSFTLL. Zn(2+) is bound by residues Cys193, Cys201, Cys204, and Cys207.

Belongs to the QueC family. Zn(2+) serves as cofactor.

It carries out the reaction 7-carboxy-7-deazaguanine + NH4(+) + ATP = 7-cyano-7-deazaguanine + ADP + phosphate + H2O + H(+). Its pathway is purine metabolism; 7-cyano-7-deazaguanine biosynthesis. Its function is as follows. Catalyzes the ATP-dependent conversion of 7-carboxy-7-deazaguanine (CDG) to 7-cyano-7-deazaguanine (preQ(0)). This chain is 7-cyano-7-deazaguanine synthase, found in Hahella chejuensis (strain KCTC 2396).